A 160-amino-acid chain; its full sequence is Calcium-binding protein CP1 (160 aa).

EF-hand domains lie at 22 to 49 (AFEI…IPSG), 52 to 87 (NDET…TPFS), and 93 to 128 (GDDG…AGLA). Residues Asp27, Asp29, Asp31, Lys33, Asp38, Asp65, Asn67, Asp69, Glu76, Asp106, Asp108, Asp110, Arg112, and Asp117 each contribute to the Ca(2+) site.

As to expression, expressed in roots and flowers.

The protein resides in the cytoplasm. It localises to the cytosol. Binds calcium in vitro. The protein is Calcium-binding protein CP1 of Arabidopsis thaliana (Mouse-ear cress).